Consider the following 207-residue polypeptide: Vascular endothelial growth factor B (207 aa).

A signal peptide spans 1-21; that stretch reads MSPLLRRLLLVALLQLACTQA. Disulfide bonds link C78-C122 and C82-C124. A disordered region spans residues 140-182; sequence IPHHRPQPRSVLSWDSAPGASSPADIIHPTPAPGPSAHAAPSA.

Belongs to the PDGF/VEGF growth factor family. Homodimer; disulfide-linked. Can also form heterodimer with VEGF.

The protein localises to the secreted. Growth factor for endothelial cells. VEGF-B167 binds heparin and neuropilin-1 whereas the binding to neuropilin-1 of VEGF-B186 is regulated by proteolysis. This chain is Vascular endothelial growth factor B (Vegfb), found in Rattus norvegicus (Rat).